The chain runs to 484 residues: Cobyric acid synthase (484 aa).

A GATase cobBQ-type domain is found at 248–435 (VLKVIVPVLP…LHGLFEGSQS (188 aa)). Cysteine 329 serves as the catalytic Nucleophile. Residue histidine 427 is part of the active site.

It belongs to the CobB/CobQ family. CobQ subfamily.

It participates in cofactor biosynthesis; adenosylcobalamin biosynthesis. Functionally, catalyzes amidations at positions B, D, E, and G on adenosylcobyrinic A,C-diamide. NH(2) groups are provided by glutamine, and one molecule of ATP is hydrogenolyzed for each amidation. The polypeptide is Cobyric acid synthase (Pseudomonas putida (strain W619)).